The sequence spans 420 residues: Mitogen-activated protein kinase HOG2 (420 aa).

ATP-binding positions include 29–37 (VGMGAFGLV) and Lys-52. The active-site Proton acceptor is the Asp-144. Thr-174 is modified (phosphothreonine). The TXY motif lies at 174 to 176 (TGY). The residue at position 176 (Tyr-176) is a Phosphotyrosine. Positions 372–394 (AQHHHQTQQQSSGKHTNPTTSSS) are disordered.

The protein belongs to the protein kinase superfamily. Ser/Thr protein kinase family. MAP kinase subfamily. HOG1 sub-subfamily. Mg(2+) is required as a cofactor. Dually phosphorylated on Thr-174 and Tyr-176, which activates the enzyme.

Its subcellular location is the cytoplasm. It localises to the nucleus. It carries out the reaction L-seryl-[protein] + ATP = O-phospho-L-seryl-[protein] + ADP + H(+). The catalysed reaction is L-threonyl-[protein] + ATP = O-phospho-L-threonyl-[protein] + ADP + H(+). Activated by tyrosine and threonine phosphorylation. Its function is as follows. Mitogen-activated protein kinase involved in a signal transduction pathway that is activated by changes in the osmolarity of the extracellular environment. Controls osmotic regulation of transcription of target genes. In Zygosaccharomyces rouxii, this protein is Mitogen-activated protein kinase HOG2 (HOG2).